We begin with the raw amino-acid sequence, 1209 residues long: Phospholipid-transporting ATPase ID (1209 aa).

Residues 1-68 are Cytoplasmic-facing; it reads MTVPKEIPEK…NIVTFLPVNL (68 aa). The segment at 12–36 is disordered; sequence ARAGAPPSWSQKKPSWGTEEERRAR. The helical transmembrane segment at 69 to 89 threads the bilayer; sequence FEQFQEVANTYFLFLLILQLI. The Exoplasmic loop segment spans residues 90–91; it reads PQ. Residues 92–112 traverse the membrane as a helical segment; that stretch reads ISSLSWFTTIVPLVLVLTITA. The Cytoplasmic segment spans residues 113–295; the sequence is VKDATDDYFR…TSIDRLMNTL (183 aa). A helical transmembrane segment spans residues 296–316; it reads VLWIFGFLVCMGVILAIGNAI. Topologically, residues 317 to 338 are exoplasmic loop; sequence WEHEVGTRFQVYLPWDEAVDSA. Residues 339–359 form a helical membrane-spanning segment; that stretch reads FFSGFLSFWSYIIILNTVVPI. Residues 360 to 898 lie on the Cytoplasmic side of the membrane; the sequence is SLYVSVEVIR…KFLCYFFYKN (539 aa). Asp-411 serves as the catalytic 4-aspartylphosphate intermediate. The ATP site is built by Asp-411, Lys-412, Thr-413, Glu-515, Phe-556, Lys-579, Arg-613, Thr-693, Gly-694, Asp-695, Arg-807, and Lys-813. Asp-411 lines the Mg(2+) pocket. Thr-413 contacts Mg(2+). Residue Asp-833 coordinates Mg(2+). ATP-binding residues include Asn-836 and Asp-837. Asp-837 provides a ligand contact to Mg(2+). Residues 899–919 traverse the membrane as a helical segment; that stretch reads FAFTMVHFWFGFFCGFSAQTV. Over 920–922 the chain is Exoplasmic loop; that stretch reads YDQ. The chain crosses the membrane as a helical span at residues 923 to 943; the sequence is YFITLYNIVYTSLPVLAMGVF. Over 944–972 the chain is Cytoplasmic; sequence DQDVPEQRSMEYPKLYEPGQLNLLFNKRE. The chain crosses the membrane as a helical span at residues 973–993; it reads FFICIAQGIYTSVLMFFIPYG. The Exoplasmic loop portion of the chain corresponds to 994–1011; that stretch reads VFAEATRDDGTQLADYQS. The chain crosses the membrane as a helical span at residues 1012–1032; that stretch reads FAVTVATSLVIVVSVQIGLDT. Residues 1033–1036 lie on the Cytoplasmic side of the membrane; sequence GYWT. The chain crosses the membrane as a helical span at residues 1037-1057; the sequence is AINHFFIWGSLAVYFAILFAM. Residues 1058 to 1082 lie on the Exoplasmic loop side of the membrane; that stretch reads HSNGLFDMFPNQFRFVGNAQNTLAQ. Residues 1083–1103 form a helical membrane-spanning segment; it reads PTVWLTIALTTAVCIMPVVAF. At 1104-1209 the chain is on the cytoplasmic side; the sequence is RFLRLSLKPD…SGGAEKPLKG (106 aa). Ser-1175 is subject to Phosphoserine. Residues 1179–1209 are disordered; the sequence is RSSSSWIESLRRKKSDSANSPSGGAEKPLKG.

This sequence belongs to the cation transport ATPase (P-type) (TC 3.A.3) family. Type IV subfamily. Component of a P4-ATPase flippase complex which consists of a catalytic alpha subunit ATP8B2 and an accessory beta subunit TMEM30A or TMEM30B. It depends on Mg(2+) as a cofactor. In terms of tissue distribution, expressed in brain and testes (at protein level).

Its subcellular location is the cell membrane. The protein localises to the endoplasmic reticulum membrane. It catalyses the reaction ATP + H2O + phospholipidSide 1 = ADP + phosphate + phospholipidSide 2.. It carries out the reaction a 1,2-diacyl-sn-glycero-3-phosphocholine(out) + ATP + H2O = a 1,2-diacyl-sn-glycero-3-phosphocholine(in) + ADP + phosphate + H(+). Catalytic component of P4-ATPase flippase complex, which catalyzes the hydrolysis of ATP coupled to the transport of phosphatidylcholine (PC) from the outer to the inner leaflet of the plasma membrane. May contribute to the maintenance of membrane lipid asymmetry. This is Phospholipid-transporting ATPase ID from Mus musculus (Mouse).